We begin with the raw amino-acid sequence, 115 residues long: Large ribosomal subunit protein uL22 (115 aa).

The protein belongs to the universal ribosomal protein uL22 family. In terms of assembly, part of the 50S ribosomal subunit.

In terms of biological role, this protein binds specifically to 23S rRNA; its binding is stimulated by other ribosomal proteins, e.g. L4, L17, and L20. It is important during the early stages of 50S assembly. It makes multiple contacts with different domains of the 23S rRNA in the assembled 50S subunit and ribosome. Functionally, the globular domain of the protein is located near the polypeptide exit tunnel on the outside of the subunit, while an extended beta-hairpin is found that lines the wall of the exit tunnel in the center of the 70S ribosome. The chain is Large ribosomal subunit protein uL22 from Coxiella burnetii (strain CbuG_Q212) (Coxiella burnetii (strain Q212)).